The sequence spans 400 residues: Tryptophan synthase beta chain (400 aa).

Lysine 95 carries the N6-(pyridoxal phosphate)lysine modification.

This sequence belongs to the TrpB family. As to quaternary structure, tetramer of two alpha and two beta chains. It depends on pyridoxal 5'-phosphate as a cofactor.

It catalyses the reaction (1S,2R)-1-C-(indol-3-yl)glycerol 3-phosphate + L-serine = D-glyceraldehyde 3-phosphate + L-tryptophan + H2O. The protein operates within amino-acid biosynthesis; L-tryptophan biosynthesis; L-tryptophan from chorismate: step 5/5. Functionally, the beta subunit is responsible for the synthesis of L-tryptophan from indole and L-serine. The polypeptide is Tryptophan synthase beta chain (Chlorobaculum tepidum (strain ATCC 49652 / DSM 12025 / NBRC 103806 / TLS) (Chlorobium tepidum)).